We begin with the raw amino-acid sequence, 360 residues long: Nucleoporin SEH1-B (360 aa).

WD repeat units lie at residues Asp-10–Cys-49, Thr-55–Lys-96, Asp-111–Gln-152, Ser-160–Ala-210, Ser-217–Ser-258, and Asn-276–Cys-315.

This sequence belongs to the WD repeat SEC13 family. In terms of assembly, component of the Nup107-160 subcomplex of the nuclear pore complex (NPC). The Nup107-160 subcomplex includes NUP160, NUP133, NUP107, NUP98, NUP85, NUP43, NUP37, SEH1 and SEC13. Component of the GATOR2 subcomplex, composed of MIOS, SEC13, SEH1L, WDR24 and WDR59. The GATOR2 complex interacts with CASTOR1 and CASTOR2; the interaction is negatively regulated by arginine. The GATOR2 complex interacts with SESN1, SESN2 and SESN3; the interaction is negatively regulated by amino acids.

The protein resides in the chromosome. Its subcellular location is the centromere. It is found in the kinetochore. It localises to the nucleus. The protein localises to the nuclear pore complex. The protein resides in the lysosome membrane. Its activity is regulated as follows. The GATOR2 complex is negatively regulated by the upstream amino acid sensors CASTOR1 and SESN2, which sequester the GATOR2 complex in absence of amino acids. In the presence of abundant amino acids, GATOR2 is released from CASTOR1 and SESN2 and activated. Component of the Nup107-160 subcomplex of the nuclear pore complex (NPC). The Nup107-160 subcomplex is required for the assembly of a functional NPC. The Nup107-160 subcomplex is also required for normal kinetochore microtubule attachment, mitotic progression and chromosome segregation. This subunit plays a role in recruitment of the Nup107-160 subcomplex to the kinetochore. Its function is as follows. As a component of the GATOR2 complex, functions as an activator of the amino acid-sensing branch of the mTORC1 signaling pathway. The GATOR2 complex indirectly activates mTORC1 through the inhibition of the GATOR1 subcomplex. GATOR2 probably acts as an E3 ubiquitin-protein ligase toward GATOR1. In the presence of abundant amino acids, the GATOR2 complex mediates ubiquitination of the NPRL2 core component of the GATOR1 complex, leading to GATOR1 inactivation. In the absence of amino acids, GATOR2 is inhibited, activating the GATOR1 complex. This chain is Nucleoporin SEH1-B (seh1l-b), found in Xenopus laevis (African clawed frog).